The following is a 293-amino-acid chain: Ribonuclease H2 subunit B (293 aa).

Positions K251–F278 are disordered. The segment covering K265–K276 has biased composition (basic residues).

It belongs to the RNase H2 subunit B family. In terms of assembly, component of the RNase H2 complex.

It is found in the nucleus. Its subcellular location is the cytoplasm. In terms of biological role, non catalytic subunit of RNase H2, an endonuclease that specifically degrades the RNA of RNA:DNA hybrids. Participates in DNA replication, possibly by mediating the removal of lagging-strand Okazaki fragment RNA primers during DNA replication. Mediates the excision of single ribonucleotides from DNA:RNA duplexes. This is Ribonuclease H2 subunit B (rnh202) from Schizosaccharomyces pombe (strain 972 / ATCC 24843) (Fission yeast).